We begin with the raw amino-acid sequence, 327 residues long: (-)-delta-cadinene synthase (327 aa).

Positions 84, 85, 222, 226, and 230 each coordinate Mg(2+).

This sequence belongs to the terpene synthase family.

It catalyses the reaction (2E,6E)-farnesyl diphosphate = (-)-delta-cadinene + diphosphate. Catalyzes the conversion of (2E,6E)-farnesyl diphosphate into (-)-delta-cadinene. Cyclization mechanism involves an intermediate nerolidyl diphosphate leading to a helminthogermacradienyl cation. The polypeptide is (-)-delta-cadinene synthase (Streptomyces clavuligerus).